A 300-amino-acid polypeptide reads, in one-letter code: N-acetylmuramic acid 6-phosphate etherase (300 aa).

Residues 57-220 (IAVAFQSGGR…TTGAMIRTGK (164 aa)) enclose the SIS domain. The active-site Proton donor is the Glu-85. Glu-116 is an active-site residue.

It belongs to the GCKR-like family. MurNAc-6-P etherase subfamily. As to quaternary structure, homodimer.

The catalysed reaction is N-acetyl-D-muramate 6-phosphate + H2O = N-acetyl-D-glucosamine 6-phosphate + (R)-lactate. It functions in the pathway amino-sugar metabolism; 1,6-anhydro-N-acetylmuramate degradation. It participates in amino-sugar metabolism; N-acetylmuramate degradation. Its pathway is cell wall biogenesis; peptidoglycan recycling. In terms of biological role, specifically catalyzes the cleavage of the D-lactyl ether substituent of MurNAc 6-phosphate, producing GlcNAc 6-phosphate and D-lactate. Together with AnmK, is also required for the utilization of anhydro-N-acetylmuramic acid (anhMurNAc) either imported from the medium or derived from its own cell wall murein, and thus plays a role in cell wall recycling. The polypeptide is N-acetylmuramic acid 6-phosphate etherase (Aliivibrio fischeri (strain MJ11) (Vibrio fischeri)).